The chain runs to 104 residues: Large ribosomal subunit protein bL21 (104 aa).

The protein belongs to the bacterial ribosomal protein bL21 family. Part of the 50S ribosomal subunit. Contacts protein L20.

This protein binds to 23S rRNA in the presence of protein L20. This Francisella tularensis subsp. holarctica (strain FTNF002-00 / FTA) protein is Large ribosomal subunit protein bL21.